A 144-amino-acid polypeptide reads, in one-letter code: Large ribosomal subunit protein uL16 (144 aa).

It belongs to the universal ribosomal protein uL16 family. Part of the 50S ribosomal subunit.

Binds 23S rRNA and is also seen to make contacts with the A and possibly P site tRNAs. The polypeptide is Large ribosomal subunit protein uL16 (Enterococcus faecalis (strain ATCC 700802 / V583)).